Here is a 202-residue protein sequence, read N- to C-terminus: 7-cyano-7-deazaguanine synthase 1 (202 aa).

Residue 7 to 17 (MSGGLDSSSAA) participates in ATP binding. Residues C166, C174, C177, and C180 each coordinate Zn(2+).

It belongs to the QueC family. Zn(2+) is required as a cofactor.

The catalysed reaction is 7-carboxy-7-deazaguanine + NH4(+) + ATP = 7-cyano-7-deazaguanine + ADP + phosphate + H2O + H(+). Its pathway is purine metabolism; 7-cyano-7-deazaguanine biosynthesis. In terms of biological role, catalyzes the ATP-dependent conversion of 7-carboxy-7-deazaguanine (CDG) to 7-cyano-7-deazaguanine (preQ(0)). The sequence is that of 7-cyano-7-deazaguanine synthase 1 (queC1) from Sulfurisphaera tokodaii (strain DSM 16993 / JCM 10545 / NBRC 100140 / 7) (Sulfolobus tokodaii).